A 748-amino-acid chain; its full sequence is Glucans biosynthesis glucosyltransferase H (748 aa).

Transmembrane regions (helical) follow at residues 85–107 (LIVRRLFIFVGTALLTLAGGYGM), 127–149 (FLVLLAWVAFSFMSALAGFFVLL), 443–465 (GIGSYVTAPLWLLFLLVGLLISL), 494–516 (AWVFAATMGLLILPKLLAYLVLI), 529–551 (GRVLAGVVCEAFVAALLAPCMMI), 587–606 (LAGPTLCGLVLSVCAYSVSL), and 608–630 (LLLWMSPVVLGLLLSIPLGIMTS).

The protein belongs to the glycosyltransferase 2 family. OpgH subfamily.

It is found in the cell inner membrane. The protein operates within glycan metabolism; osmoregulated periplasmic glucan (OPG) biosynthesis. Involved in the biosynthesis of osmoregulated periplasmic glucans (OPGs). The sequence is that of Glucans biosynthesis glucosyltransferase H from Bradyrhizobium diazoefficiens (strain JCM 10833 / BCRC 13528 / IAM 13628 / NBRC 14792 / USDA 110).